The chain runs to 105 residues: MSTKNKKAAGGNGGAPKQTRQQSHDSQDYSSFKTVLFYCMLIVFLPVLTFFVLKGFVLDQFLDISEVKVNIASAVGAVVALHVALGLYIYRAYFGAPGSKASKTD.

Residues 1–26 are disordered; the sequence is MSTKNKKAAGGNGGAPKQTRQQSHDS. The Cytoplasmic portion of the chain corresponds to 1–36; it reads MSTKNKKAAGGNGGAPKQTRQQSHDSQDYSSFKTVL. A helical membrane pass occupies residues 37–57; the sequence is FYCMLIVFLPVLTFFVLKGFV. Residues 58-68 lie on the Lumenal side of the membrane; it reads LDQFLDISEVK. The chain crosses the membrane as a helical span at residues 69-89; it reads VNIASAVGAVVALHVALGLYI. Over 90–105 the chain is Cytoplasmic; that stretch reads YRAYFGAPGSKASKTD.

It belongs to the VMA21 family.

It localises to the endoplasmic reticulum membrane. Its subcellular location is the endoplasmic reticulum-Golgi intermediate compartment membrane. The protein resides in the cytoplasmic vesicle. The protein localises to the COPII-coated vesicle membrane. Functionally, required for the assembly of the V0 complex of the vacuolar ATPase (V-ATPase) in the endoplasmic reticulum. This is Vacuolar ATPase assembly integral membrane protein VMA21 homolog from Drosophila yakuba (Fruit fly).